Here is a 236-residue protein sequence, read N- to C-terminus: Diaminopimelate epimerase (236 aa).

Residues N8 and N55 each coordinate substrate. C64 functions as the Proton donor in the catalytic mechanism. Residues 65–66, N159, and 176–177 each bind substrate; these read GN and ER. Catalysis depends on C186, which acts as the Proton acceptor. A substrate-binding site is contributed by 187-188; sequence GT.

Belongs to the diaminopimelate epimerase family. Probably forms homotrimers.

The protein resides in the cytoplasm. It catalyses the reaction (2S,6S)-2,6-diaminopimelate = meso-2,6-diaminopimelate. The protein operates within amino-acid biosynthesis; L-lysine biosynthesis via DAP pathway; DL-2,6-diaminopimelate from LL-2,6-diaminopimelate: step 1/1. Functionally, catalyzes the stereoinversion of LL-2,6-diaminopimelate (L,L-DAP) to meso-diaminopimelate (meso-DAP), a precursor of L-lysine and an essential component of the bacterial peptidoglycan. Also catalyzes the racemization of certain amino acids, including Lys, with low efficiency. The chain is Diaminopimelate epimerase from Thermotoga maritima (strain ATCC 43589 / DSM 3109 / JCM 10099 / NBRC 100826 / MSB8).